We begin with the raw amino-acid sequence, 45 residues long: MPMATTIEGADYTNIMPITVLTTVYLGVSIGIDTSTTGFTCFSRY.

It belongs to the coronaviruses ns4/ns4.8 protein family.

This chain is Non-structural protein of 4.8 kDa, found in Bos taurus (Bovine).